The following is a 395-amino-acid chain: MAKENFNRSKPHLNIGTIGHVDHGKTTLTAAITKVLSDAGYCQAKSFDQIDNAPEEKERGITINTSHVEYETANRHYAHVDCPGHADYVKNMVTGAAQMDGAILVVAATDGPMPQTREHILLGRQVGIPRIVVFMNKVDMVDDAELLELVEMEIRDLLSFYEYDGDNGPVVQGSALGGLNNDPNWVPKIIELMEAVDNWIEEPVRDVAKPFLMPVEDVFTITGRGTVATGRIETGVANTGDPVEIIGMGAEKLTSTITGVEMFRKILDRGEAGDNVGLLLRGIDKADIKRGMVIIKPGSVKPHAKFKAEVYILKKEEGGRHTPFHNNYRPQFYVRTTDVTGVISLPAGVEMVMPGDNLTIEVALLSPIAMNVGLRFAIREGGRTVGAGQVTEIVE.

The tr-type G domain occupies 10 to 204 (KPHLNIGTIG…AVDNWIEEPV (195 aa)). Residues 19 to 26 (GHVDHGKT) are G1. 19-26 (GHVDHGKT) contacts GTP. T26 provides a ligand contact to Mg(2+). The G2 stretch occupies residues 60–64 (GITIN). Residues 81 to 84 (DCPG) are G3. Residues 81 to 85 (DCPGH) and 136 to 139 (NKVD) contribute to the GTP site. The G4 stretch occupies residues 136–139 (NKVD). Positions 174 to 176 (SAL) are G5.

It belongs to the TRAFAC class translation factor GTPase superfamily. Classic translation factor GTPase family. EF-Tu/EF-1A subfamily. In terms of assembly, monomer.

The protein localises to the cytoplasm. The catalysed reaction is GTP + H2O = GDP + phosphate + H(+). In terms of biological role, GTP hydrolase that promotes the GTP-dependent binding of aminoacyl-tRNA to the A-site of ribosomes during protein biosynthesis. In Flavobacterium johnsoniae (strain ATCC 17061 / DSM 2064 / JCM 8514 / BCRC 14874 / CCUG 350202 / NBRC 14942 / NCIMB 11054 / UW101) (Cytophaga johnsonae), this protein is Elongation factor Tu.